A 339-amino-acid polypeptide reads, in one-letter code: Ketol-acid reductoisomerase (NADP(+)) (339 aa).

The region spanning 1 to 182 (MRVYYDRDAD…GGGRAGIIET (182 aa)) is the KARI N-terminal Rossmann domain. NADP(+)-binding positions include 24–27 (YGSQ), R48, S51, T53, and 83–86 (DELQ). Residue H108 is part of the active site. G134 contacts NADP(+). The region spanning 183 to 328 (SFKEECETDL…AKLRDMMPWI (146 aa)) is the KARI C-terminal knotted domain. Mg(2+)-binding residues include D191, E195, E227, and E231. S252 serves as a coordination point for substrate.

Belongs to the ketol-acid reductoisomerase family. The cofactor is Mg(2+).

It catalyses the reaction (2R)-2,3-dihydroxy-3-methylbutanoate + NADP(+) = (2S)-2-acetolactate + NADPH + H(+). It carries out the reaction (2R,3R)-2,3-dihydroxy-3-methylpentanoate + NADP(+) = (S)-2-ethyl-2-hydroxy-3-oxobutanoate + NADPH + H(+). It participates in amino-acid biosynthesis; L-isoleucine biosynthesis; L-isoleucine from 2-oxobutanoate: step 2/4. Its pathway is amino-acid biosynthesis; L-valine biosynthesis; L-valine from pyruvate: step 2/4. Involved in the biosynthesis of branched-chain amino acids (BCAA). Catalyzes an alkyl-migration followed by a ketol-acid reduction of (S)-2-acetolactate (S2AL) to yield (R)-2,3-dihydroxy-isovalerate. In the isomerase reaction, S2AL is rearranged via a Mg-dependent methyl migration to produce 3-hydroxy-3-methyl-2-ketobutyrate (HMKB). In the reductase reaction, this 2-ketoacid undergoes a metal-dependent reduction by NADPH to yield (R)-2,3-dihydroxy-isovalerate. This is Ketol-acid reductoisomerase (NADP(+)) from Rhodopseudomonas palustris (strain HaA2).